The chain runs to 456 residues: Tyrosine phenol-lyase (456 aa).

At Lys257 the chain carries N6-(pyridoxal phosphate)lysine.

This sequence belongs to the beta-eliminating lyase family. As to quaternary structure, homotetramer. Requires pyridoxal 5'-phosphate as cofactor.

It carries out the reaction L-tyrosine + H2O = phenol + pyruvate + NH4(+). This chain is Tyrosine phenol-lyase (tpl), found in Citrobacter intermedius (Escherichia intermedia).